Consider the following 105-residue polypeptide: uncharacterized protein (105 aa).

The protein resides in the mitochondrion. This is an uncharacterized protein from Paramecium tetraurelia.